The chain runs to 188 residues: Trafficking protein particle complex subunit 5 (188 aa).

This sequence belongs to the TRAPP small subunits family. BET3 subfamily. In terms of assembly, part of the multisubunit TRAPP (transport protein particle) complex.

The protein resides in the golgi apparatus. It is found in the cis-Golgi network. The protein localises to the endoplasmic reticulum. Functionally, may play a role in vesicular transport from endoplasmic reticulum to Golgi. This Gallus gallus (Chicken) protein is Trafficking protein particle complex subunit 5 (TRAPPC5).